The primary structure comprises 479 residues: GTPase Obg (479 aa).

In terms of domain architecture, Obg spans 2–159 (PRFVDRVVIH…RDLTLELKTV (158 aa)). The region spanning 160-340 (ADVGLVGFPS…LIFGLSQMIS (181 aa)) is the OBG-type G domain. GTP-binding positions include 166 to 173 (GFPSAGKS), 191 to 195 (FTTLV), 212 to 215 (DVPG), 292 to 295 (NKID), and 321 to 323 (STA). Residues Ser173 and Thr193 each coordinate Mg(2+). Positions 358–436 (PIPVDDSGFT…IGEMTFDWEP (79 aa)) constitute an OCT domain. Positions 434 to 479 (WEPQTPAGEPVAMSGRGTDPRLDSNKRVGAAERKAARSRRREHGDG) are disordered. Basic and acidic residues predominate over residues 451-468 (TDPRLDSNKRVGAAERKA). The segment covering 469-479 (ARSRRREHGDG) has biased composition (basic residues).

It belongs to the TRAFAC class OBG-HflX-like GTPase superfamily. OBG GTPase family. In terms of assembly, monomer. Requires Mg(2+) as cofactor.

It is found in the cytoplasm. An essential GTPase which binds GTP, GDP and possibly (p)ppGpp with moderate affinity, with high nucleotide exchange rates and a fairly low GTP hydrolysis rate. Plays a role in control of the cell cycle, stress response, ribosome biogenesis and in those bacteria that undergo differentiation, in morphogenesis control. This Mycobacterium tuberculosis (strain ATCC 25177 / H37Ra) protein is GTPase Obg.